Consider the following 368-residue polypeptide: Quinolinate synthase (368 aa).

Iminosuccinate-binding residues include histidine 46 and serine 63. Cysteine 110 serves as a coordination point for [4Fe-4S] cluster. Iminosuccinate-binding positions include 141–143 (YVN) and serine 162. [4Fe-4S] cluster is bound at residue cysteine 230. Residues 256–258 (HPE) and threonine 273 contribute to the iminosuccinate site. Cysteine 320 serves as a coordination point for [4Fe-4S] cluster.

Belongs to the quinolinate synthase family. Type 3 subfamily. Requires [4Fe-4S] cluster as cofactor.

It localises to the cytoplasm. The enzyme catalyses iminosuccinate + dihydroxyacetone phosphate = quinolinate + phosphate + 2 H2O + H(+). Its pathway is cofactor biosynthesis; NAD(+) biosynthesis; quinolinate from iminoaspartate: step 1/1. Catalyzes the condensation of iminoaspartate with dihydroxyacetone phosphate to form quinolinate. This Bacillus cereus (strain ZK / E33L) protein is Quinolinate synthase.